Here is a 189-residue protein sequence, read N- to C-terminus: ATP-dependent protease subunit HslV (189 aa).

The active site involves T12. The Na(+) site is built by A172, C175, and T178.

Belongs to the peptidase T1B family. HslV subfamily. A double ring-shaped homohexamer of HslV is capped on each side by a ring-shaped HslU homohexamer. The assembly of the HslU/HslV complex is dependent on binding of ATP.

It is found in the cytoplasm. The catalysed reaction is ATP-dependent cleavage of peptide bonds with broad specificity.. With respect to regulation, allosterically activated by HslU binding. Its function is as follows. Protease subunit of a proteasome-like degradation complex believed to be a general protein degrading machinery. The protein is ATP-dependent protease subunit HslV of Anaplasma phagocytophilum (strain HZ).